We begin with the raw amino-acid sequence, 372 residues long: Germination protease (372 aa).

A propeptide spanning residues 1-15 (MVKELNLEQYNVRTD) is cleaved from the precursor.

Belongs to the peptidase A25 family. As to quaternary structure, homotetramer. In terms of processing, autoproteolytically processed. The inactive tetrameric zymogen termed p46 autoprocesses to a smaller form termed p41, which is active only during spore germination.

It catalyses the reaction Endopeptidase action with P4 Glu or Asp, P1 preferably Glu &gt; Asp, P1' hydrophobic and P2' Ala.. Initiates the rapid degradation of small, acid-soluble proteins during spore germination. This Halalkalibacterium halodurans (strain ATCC BAA-125 / DSM 18197 / FERM 7344 / JCM 9153 / C-125) (Bacillus halodurans) protein is Germination protease.